The chain runs to 185 residues: Ribosome-recycling factor (185 aa).

The protein belongs to the RRF family.

It is found in the cytoplasm. Functionally, responsible for the release of ribosomes from messenger RNA at the termination of protein biosynthesis. May increase the efficiency of translation by recycling ribosomes from one round of translation to another. This Nocardia farcinica (strain IFM 10152) protein is Ribosome-recycling factor.